The following is a 207-amino-acid chain: Ribonuclease HII (207 aa).

The region spanning 12–201 (DLVAGVDEVG…VRAAWEVREG (190 aa)) is the RNase H type-2 domain. 3 residues coordinate a divalent metal cation: D18, E19, and D110.

It belongs to the RNase HII family. Mn(2+) serves as cofactor. The cofactor is Mg(2+).

Its subcellular location is the cytoplasm. It carries out the reaction Endonucleolytic cleavage to 5'-phosphomonoester.. Endonuclease that specifically degrades the RNA of RNA-DNA hybrids. This is Ribonuclease HII from Pseudomonas putida (strain ATCC 700007 / DSM 6899 / JCM 31910 / BCRC 17059 / LMG 24140 / F1).